Here is a 180-residue protein sequence, read N- to C-terminus: ATP synthase subunit b (180 aa).

Residues 15–35 (LIPEVPELVIGLLAFAIVFFV) form a helical membrane-spanning segment.

The protein belongs to the ATPase B chain family. In terms of assembly, F-type ATPases have 2 components, F(1) - the catalytic core - and F(0) - the membrane proton channel. F(1) has five subunits: alpha(3), beta(3), gamma(1), delta(1), epsilon(1). F(0) has three main subunits: a(1), b(2) and c(10-14). The alpha and beta chains form an alternating ring which encloses part of the gamma chain. F(1) is attached to F(0) by a central stalk formed by the gamma and epsilon chains, while a peripheral stalk is formed by the delta and b chains.

It localises to the cell membrane. Its function is as follows. F(1)F(0) ATP synthase produces ATP from ADP in the presence of a proton or sodium gradient. F-type ATPases consist of two structural domains, F(1) containing the extramembraneous catalytic core and F(0) containing the membrane proton channel, linked together by a central stalk and a peripheral stalk. During catalysis, ATP synthesis in the catalytic domain of F(1) is coupled via a rotary mechanism of the central stalk subunits to proton translocation. In terms of biological role, component of the F(0) channel, it forms part of the peripheral stalk, linking F(1) to F(0). In Streptomyces avermitilis (strain ATCC 31267 / DSM 46492 / JCM 5070 / NBRC 14893 / NCIMB 12804 / NRRL 8165 / MA-4680), this protein is ATP synthase subunit b.